The following is a 527-amino-acid chain: Inorganic phosphate transporter 1-1 (527 aa).

The Cytoplasmic portion of the chain corresponds to 1 to 21 (MAGGQLNVLSTLDQAKTQWYH). The chain crosses the membrane as a helical span at residues 22–42 (FMAIVIAGMGFFTDAYDLFCI). Residues 43–70 (SLVTKLLGRIYYTDDSKDTPGALPPNVS) are Extracellular-facing. A helical transmembrane segment spans residues 71 to 91 (AAVTGVALCGTLAGQLFFGWL). Residues 92 to 99 (GDKLGRKS) are Cytoplasmic-facing. Residues 100 to 120 (VYGFTLILMVVCSVASGLSFG) form a helical membrane-spanning segment. Topologically, residues 121-124 (SSAK) are extracellular. The helical transmembrane segment at 125–145 (GVVSTLCFFRFWLGFGIGGDY) threads the bilayer. Over 146–163 (PLSATIMSEYANKRTRGA) the chain is Cytoplasmic. A helical membrane pass occupies residues 164 to 184 (FIAAVFAMQGFGILFGAIVAL). Residues 185–211 (AVSAGFRHAYPAPSYSDNHAASLVPQA) are Extracellular-facing. A helical membrane pass occupies residues 212 to 232 (DYVWRIILMFGTVPAALTYYW). The Cytoplasmic segment spans residues 233 to 292 (RMKMPETARYTALIARNAKQAAADMSKVLHTQIEESADRAETVAVGGESWGLFSRQFLRR). A helical transmembrane segment spans residues 293–313 (HGLHLLATTSTWFLLDIAFYS). Residues 314–348 (QNLFQKDIFSKVGWIPPAKTMNALEELYRIARAQA) lie on the Extracellular side of the membrane. The helical transmembrane segment at 349-369 (LIALCGTIPGYWFTVAFIEIM) threads the bilayer. The Cytoplasmic portion of the chain corresponds to 370-371 (GR). A helical transmembrane segment spans residues 372 to 392 (FWIQIMGFAMMTAFMLGLAIP). The Extracellular segment spans residues 393-405 (YHHWTTPGHHTGF). The helical transmembrane segment at 406–426 (IVMYGFTFFFANFGPNSTTFI) threads the bilayer. Residues 427–442 (VPAEIYPARLRSTCHG) are Cytoplasmic-facing. A helical membrane pass occupies residues 443–463 (ISAAAGKAGAIIGAFGFLYAA). Over 464–481 (QDQHKPEPGYPRGIGIKN) the chain is Extracellular. Residues 482–502 (ALFVLAGTNFLGTIMTLLVPE) form a helical membrane-spanning segment. Over 503–527 (SKGMSLEVISQEVADGDDEEAAYPK) the chain is Cytoplasmic.

Belongs to the major facilitator superfamily. Phosphate:H(+) symporter (TC 2.A.1.9) family. Expressed in roots, stems and leaves.

It is found in the membrane. Functionally, high-affinity transporter for external inorganic phosphate. Required for phosphate acquisition in plant. The sequence is that of Inorganic phosphate transporter 1-1 (PHT1-1) from Oryza sativa subsp. japonica (Rice).